Consider the following 503-residue polypeptide: Glucosaminyl-phosphatidylinositol-acyltransferase PIGW (503 aa).

Topologically, residues 1 to 21 (MSQKQLKEAFVRNLSGTSVLE) are lumenal. Residue Asn-13 is glycosylated (N-linked (GlcNAc...) asparagine). A helical transmembrane segment spans residues 22-42 (VTQGLCFPAFCILCRGLWIIF). Topologically, residues 43–48 (SQHVCS) are cytoplasmic. Residues 49 to 71 (FSNTWSTRFLMDFVVLIVPLVIT) traverse the membrane as a helical segment. At 72–74 (LTV) the chain is on the lumenal side. The chain crosses the membrane as a helical span at residues 75–97 (LSSFILLENLTVIVWGAWLLYQI). Over 98–131 (YHRRTCYAKVPVQKVFANFLKISLESEYNPAITC) the chain is Cytoplasmic. The helical transmembrane segment at 132-152 (YRVINSVFTAIAILAVDFPLF) threads the bilayer. Residues 153 to 160 (PRRFAKTE) are Lumenal-facing. The helical transmembrane segment at 161–181 (LYGTGAMDFGVGGFIFGAAMV) threads the bilayer. Over 182 to 201 (CPEVRRKSIEESRFNYLRKS) the chain is Cytoplasmic. Residues 202-222 (LYSVWPLVFLGMGRLVIIKSI) form a helical membrane-spanning segment. The Lumenal segment spans residues 223 to 236 (GYQEHSTEYGIHWN). The chain crosses the membrane as a helical span at residues 237-257 (FFFTIIVVRLVTSLLLIIFPL). At 258 to 259 (NK) the chain is on the cytoplasmic side. The chain crosses the membrane as a helical span at residues 260–280 (SWIVAVSITVVYQLALDYTPL). Topologically, residues 281–304 (KRILLYGTDGSGTRVGFLNANREG) are lumenal. A helical transmembrane segment spans residues 305–325 (IISTLGYVTIHMAGVQTGLYV). Topologically, residues 326–339 (LKGRAQVRDWIKAT) are cytoplasmic. Residues 340–360 (CWVFSVAVGFFISLHIVQVNI) traverse the membrane as a helical segment. Over 361-380 (EAVSRRMANLAFCLWVVASS) the chain is Lumenal. Residues 381–401 (LMLLSCLLLSGIILSFAQFLI) form a helical membrane-spanning segment. At 402–447 (KGSLVPCSWKLIQSPTTHKNHSESLILEAEKNQPSLCLITALNRNQ) the chain is on the cytoplasmic side. The residue at position 415 (Ser-415) is a Phosphoserine. A helical transmembrane segment spans residues 448–468 (LFFFLLSNITTGLINLTMDTL). Residues 469–472 (HTGA) lie on the Lumenal side of the membrane. A helical transmembrane segment spans residues 473 to 493 (LWTLVVLSIYMFTNCLVIYVL). The Cytoplasmic portion of the chain corresponds to 494–503 (DLQGKTIKFW).

This sequence belongs to the PIGW family.

Its subcellular location is the endoplasmic reticulum membrane. It participates in glycolipid biosynthesis; glycosylphosphatidylinositol-anchor biosynthesis. Functionally, acyltransferase that catalyzes the acyl transfer from an acyl-CoA at the 2-OH position of the inositol ring of glucosaminyl phosphatidylinositol (GlcN-PI) to generate GlcN-(acyl)PI and participates in the fourth step of GPI-anchor biosynthesi. Required for the transport of GPI-anchored proteins to the plasma membrane. Acetylation during GPI-anchor biosynthesis is not essential for the subsequent mannosylation and is usually removed soon after the attachment of GPIs to proteins. The polypeptide is Glucosaminyl-phosphatidylinositol-acyltransferase PIGW (Mus musculus (Mouse)).